The chain runs to 1094 residues: AP-3 complex subunit beta-1 (1094 aa).

Positions 1 to 11 are enriched in polar residues; that stretch reads MSSNSFPYNEQ. 2 disordered regions span residues 1 to 31 and 268 to 292; these read MSSN…ISPS and DNGK…KPYT. A phosphoserine mark is found at Ser276 and Ser609. The segment at 662–811 is disordered; the sequence is PAGKAKQENS…EKKTKQDRTP (150 aa). Residues 666–677 show a composition bias toward basic and acidic residues; sequence AKQENSAKKFYS. 2 stretches are compositionally biased toward acidic residues: residues 678–696 and 705–726; these read ESEE…ESES and ESGE…EQDS. Basic and acidic residues-rich tracts occupy residues 727–738 and 748–764; these read ESGRESGLENKR and GKSD…KSKT. Phosphoserine is present on residues Ser750 and Ser752. Residues 765–777 are compositionally biased toward low complexity; the sequence is SDSSNDESSSIED. A compositionally biased stretch (acidic residues) spans 778 to 791; the sequence is SSSDSESESEPESE. Residues 792–811 are compositionally biased toward basic and acidic residues; it reads SESRRVTKEKEKKTKQDRTP.

The protein belongs to the adaptor complexes large subunit family. As to quaternary structure, adaptor protein complex 3 (AP-3) is a heterotetramer composed of two large adaptins (delta-type subunit AP3D1 and beta-type subunit AP3B1 or AP3B2), a medium adaptin (mu-type subunit AP3M1 or AP3M2) and a small adaptin (sigma-type subunit APS1 or AP3S2). AP-3 associates with the BLOC-1 complex. Interacts with KIF3A; interaction is direct; interaction is impaired by pyrophosphorylation of AP3B1. Phosphorylated on serine residues. In terms of processing, pyrophosphorylation by 5-diphosphoinositol pentakisphosphate (5-IP7) impairs interaction with KIF3A. Serine pyrophosphorylation is achieved by Mg(2+)-dependent, but enzyme independent transfer of a beta-phosphate from a inositol pyrophosphate to a pre-phosphorylated serine residue. In terms of tissue distribution, ubiquitously expressed.

The protein resides in the cytoplasmic vesicle. It is found in the clathrin-coated vesicle membrane. Its subcellular location is the golgi apparatus. Its function is as follows. Subunit of non-clathrin- and clathrin-associated adaptor protein complex 3 (AP-3) that plays a role in protein sorting in the late-Golgi/trans-Golgi network (TGN) and/or endosomes. The AP complexes mediate both the recruitment of clathrin to membranes and the recognition of sorting signals within the cytosolic tails of transmembrane cargo molecules. AP-3 appears to be involved in the sorting of a subset of transmembrane proteins targeted to lysosomes and lysosome-related organelles. In concert with the BLOC-1 complex, AP-3 is required to target cargos into vesicles assembled at cell bodies for delivery into neurites and nerve terminals. This is AP-3 complex subunit beta-1 (AP3B1) from Homo sapiens (Human).